The sequence spans 547 residues: Fimbria adhesin EcpD (547 aa).

Residues 1-20 form the signal peptide; the sequence is MRVNLLIAMIIFALIWPATA.

Belongs to the EcpD/MatE family. Forms polymers. Interacts with EcpA.

Its subcellular location is the fimbrium. Functionally, part of the ecpRABCDE operon, which encodes the E.coli common pilus (ECP). ECP is found in both commensal and pathogenic strains and plays a dual role in early-stage biofilm development and host cell recognition. Tip pilus adhesin, which is required for assembly of EcpA into fibers. This chain is Fimbria adhesin EcpD (ecpD), found in Escherichia coli O127:H6 (strain E2348/69 / EPEC).